Consider the following 1407-residue polypeptide: DNA-directed RNA polymerase subunit beta' (1407 aa).

Residues Cys-70, Cys-72, Cys-85, and Cys-88 each coordinate Zn(2+). Residues Asp-460, Asp-462, and Asp-464 each coordinate Mg(2+). Positions 814, 888, 895, and 898 each coordinate Zn(2+).

The protein belongs to the RNA polymerase beta' chain family. The RNAP catalytic core consists of 2 alpha, 1 beta, 1 beta' and 1 omega subunit. When a sigma factor is associated with the core the holoenzyme is formed, which can initiate transcription. Mg(2+) serves as cofactor. The cofactor is Zn(2+).

The enzyme catalyses RNA(n) + a ribonucleoside 5'-triphosphate = RNA(n+1) + diphosphate. DNA-dependent RNA polymerase catalyzes the transcription of DNA into RNA using the four ribonucleoside triphosphates as substrates. In Buchnera aphidicola subsp. Acyrthosiphon pisum (strain APS) (Acyrthosiphon pisum symbiotic bacterium), this protein is DNA-directed RNA polymerase subunit beta'.